We begin with the raw amino-acid sequence, 323 residues long: Sphingolipid delta(4)-desaturase/C4-monooxygenase DES2 (323 aa).

Residue glycine 2 is the site of N-myristoyl glycine attachment. 2 consecutive transmembrane segments (helical) span residues 41–61 and 68–88; these read PNIK…CWLV and WLLF…TLAI. Positions 89 to 93 match the Histidine box-1 motif; sequence HDISH. A required for C4-hydroxylase activity region spans residues 95–99; it reads TAFGT. The short motif at 128–132 is the Histidine box-2 element; the sequence is HVDHH. The helical transmembrane segment at 200 to 220 threads the bilayer; that stretch reads IFALWGIKAIVYLLASSLLGL. A Histidine box-3 motif is present at residues 259-263; that stretch reads HVEHH.

The protein belongs to the fatty acid desaturase type 1 family. DEGS subfamily.

It is found in the endoplasmic reticulum membrane. The catalysed reaction is a dihydroceramide + 2 Fe(II)-[cytochrome b5] + O2 + 2 H(+) = a phytoceramide + 2 Fe(III)-[cytochrome b5] + H2O. The enzyme catalyses an N-acylsphinganine + 2 Fe(II)-[cytochrome b5] + O2 + 2 H(+) = an N-acylsphing-4-enine + 2 Fe(III)-[cytochrome b5] + 2 H2O. It catalyses the reaction N-octanoylsphinganine + 2 Fe(II)-[cytochrome b5] + O2 + 2 H(+) = N-octanoyl-4-hydroxysphinganine + 2 Fe(III)-[cytochrome b5] + H2O. It carries out the reaction an N-acylsphinganine + 2 Fe(II)-[cytochrome b5] + O2 + 2 H(+) = an N-acyl-(4R)-4-hydroxysphinganine + 2 Fe(III)-[cytochrome b5] + H2O. It participates in membrane lipid metabolism; sphingolipid biosynthesis. In terms of biological role, bifunctional enzyme which acts both as a sphingolipid delta(4)-desaturase and a sphingolipid C4-monooxygenase. This is Sphingolipid delta(4)-desaturase/C4-monooxygenase DES2 from Rattus norvegicus (Rat).